A 216-amino-acid chain; its full sequence is RNA pyrophosphohydrolase (216 aa).

Residues Gly6 to Thr149 enclose the Nudix hydrolase domain. The Nudix box motif lies at Gly38–Gly59. The segment at Ala159–His180 is disordered.

It belongs to the Nudix hydrolase family. RppH subfamily. A divalent metal cation serves as cofactor.

Functionally, accelerates the degradation of transcripts by removing pyrophosphate from the 5'-end of triphosphorylated RNA, leading to a more labile monophosphorylated state that can stimulate subsequent ribonuclease cleavage. This is RNA pyrophosphohydrolase from Burkholderia thailandensis (strain ATCC 700388 / DSM 13276 / CCUG 48851 / CIP 106301 / E264).